We begin with the raw amino-acid sequence, 252 residues long: 2-succinyl-6-hydroxy-2,4-cyclohexadiene-1-carboxylate synthase (252 aa).

This sequence belongs to the AB hydrolase superfamily. MenH family. As to quaternary structure, monomer.

The catalysed reaction is 5-enolpyruvoyl-6-hydroxy-2-succinyl-cyclohex-3-ene-1-carboxylate = (1R,6R)-6-hydroxy-2-succinyl-cyclohexa-2,4-diene-1-carboxylate + pyruvate. It participates in quinol/quinone metabolism; 1,4-dihydroxy-2-naphthoate biosynthesis; 1,4-dihydroxy-2-naphthoate from chorismate: step 3/7. It functions in the pathway quinol/quinone metabolism; menaquinone biosynthesis. Functionally, catalyzes a proton abstraction reaction that results in 2,5-elimination of pyruvate from 2-succinyl-5-enolpyruvyl-6-hydroxy-3-cyclohexene-1-carboxylate (SEPHCHC) and the formation of 2-succinyl-6-hydroxy-2,4-cyclohexadiene-1-carboxylate (SHCHC). This Shigella sonnei (strain Ss046) protein is 2-succinyl-6-hydroxy-2,4-cyclohexadiene-1-carboxylate synthase.